Consider the following 157-residue polypeptide: dCTP deaminase (157 aa).

DCTP-binding positions include 79–84 (RSSLAR), Asp-95, Gln-124, and Tyr-138.

The protein belongs to the dCTP deaminase family. Homotrimer.

It catalyses the reaction dCTP + H2O + H(+) = dUTP + NH4(+). The protein operates within pyrimidine metabolism; dUMP biosynthesis; dUMP from dCTP (dUTP route): step 1/2. Its function is as follows. Catalyzes the deamination of dCTP to dUTP. This is dCTP deaminase from Thermococcus gammatolerans (strain DSM 15229 / JCM 11827 / EJ3).